Reading from the N-terminus, the 219-residue chain is Phosphatidylserine decarboxylase proenzyme (219 aa).

The active-site Schiff-base intermediate with substrate; via pyruvic acid is serine 188. Serine 188 carries the pyruvic acid (Ser); by autocatalysis modification.

The protein belongs to the phosphatidylserine decarboxylase family. PSD-A subfamily. As to quaternary structure, heterodimer of a large membrane-associated beta subunit and a small pyruvoyl-containing alpha subunit. Pyruvate serves as cofactor. Post-translationally, is synthesized initially as an inactive proenzyme. Formation of the active enzyme involves a self-maturation process in which the active site pyruvoyl group is generated from an internal serine residue via an autocatalytic post-translational modification. Two non-identical subunits are generated from the proenzyme in this reaction, and the pyruvate is formed at the N-terminus of the alpha chain, which is derived from the carboxyl end of the proenzyme. The post-translation cleavage follows an unusual pathway, termed non-hydrolytic serinolysis, in which the side chain hydroxyl group of the serine supplies its oxygen atom to form the C-terminus of the beta chain, while the remainder of the serine residue undergoes an oxidative deamination to produce ammonia and the pyruvoyl prosthetic group on the alpha chain.

The protein localises to the cell membrane. It catalyses the reaction a 1,2-diacyl-sn-glycero-3-phospho-L-serine + H(+) = a 1,2-diacyl-sn-glycero-3-phosphoethanolamine + CO2. It participates in phospholipid metabolism; phosphatidylethanolamine biosynthesis; phosphatidylethanolamine from CDP-diacylglycerol: step 2/2. In terms of biological role, catalyzes the formation of phosphatidylethanolamine (PtdEtn) from phosphatidylserine (PtdSer). The polypeptide is Phosphatidylserine decarboxylase proenzyme (Ruegeria pomeroyi (strain ATCC 700808 / DSM 15171 / DSS-3) (Silicibacter pomeroyi)).